The sequence spans 960 residues: Testis anion transporter 1 (960 aa).

At 1 to 93 the chain is on the cytoplasmic side; the sequence is MQPDRSFQSF…YRFKDWLLGD (93 aa). A helical membrane pass occupies residues 94-114; it reads LLAGISVGLVQIPQVLMLGLL. The Extracellular portion of the chain corresponds to 115–117; it reads ARH. The helical transmembrane segment at 118–138 threads the bilayer; sequence LIPPLNVSYAAFCASVIYGIF. Residue glycine 139 is a topological domain, cytoplasmic. The chain crosses the membrane as a helical span at residues 140 to 160; that stretch reads SCHQMSIGTFFLVSALAINVL. Topologically, residues 161-201 are extracellular; the sequence is RTQPFNRGHLLLGTFIQADFSNTSFYENYNRSLSSVASVTL. An N-linked (GlcNAc...) asparagine glycan is attached at asparagine 190. The next 2 helical transmembrane spans lie at 202 to 222 and 223 to 243; these read LTGIIQLSMGMLGFGFIVAYI and PEAAISAYLAATALHVMLSQL. Topologically, residues 244-268 are cytoplasmic; it reads TCIFGIMISYNSGPIAFFYNIINYC. The chain crosses the membrane as a helical span at residues 269–289; it reads LGLPKANSTSILLFLTAMVAL. The Extracellular segment spans residues 290–353; it reads RINKCIRISF…PVTPDMSNLT (64 aa). The helical transmembrane segment at 354–374 threads the bilayer; it reads EVLIESFSLALVSSSLLVFLG. Over 375–390 the chain is Cytoplasmic; that stretch reads KKIASFHNYDVNSNQD. A helical transmembrane segment spans residues 391–411; sequence LIAIGLCNVVSSFFRSYVFTG. The Extracellular segment spans residues 412-427; the sequence is AVARTIIQDKTGGRQQ. A helical transmembrane segment spans residues 428–448; the sequence is FASLVGAGIMLLLMMKMARFF. Over 449 to 453 the chain is Cytoplasmic; the sequence is YRLPN. Residues 454 to 474 form a helical membrane-spanning segment; sequence AIVAGIILSNVLPYLEAVYTL. Residues 475-494 lie on the Extracellular side of the membrane; it reads PSLWRQNQYDCLIWMVTFMS. A helical transmembrane segment spans residues 495–515; that stretch reads AILLGLDIGLVVAVTFAFFII. Residues 516–960 are Cytoplasmic-facing; that stretch reads TVQSHRTKIL…ADTSEDALEI (445 aa). Positions 541-792 constitute an STAS domain; sequence DYREVANIPG…LTLHDAVLFA (252 aa). The segment at 662–957 is interaction with RACGAP1; sequence ITSSSSQRNP…TSKADTSEDA (296 aa). Disordered stretches follow at residues 807-857 and 881-960; these read ESET…EESD and EVEP…ALEI. The span at 818–827 shows a compositional bias: basic and acidic residues; it reads ETDKKEESRH. Residues 884 to 904 are compositionally biased toward acidic residues; that stretch reads PESELEPESELDQETELEPEP. Polar residues predominate over residues 926–935; the sequence is SPTQTQARTQ.

This sequence belongs to the SLC26A/SulP transporter (TC 2.A.53) family. As to quaternary structure, interacts with RACGAP1. Interacts with CFTR; stimulates anion transport activity of CFTR. N-glycosylated.

It is found in the membrane. It catalyses the reaction sulfate(out) + chloride(in) = sulfate(in) + chloride(out). The enzyme catalyses oxalate(in) + chloride(out) = oxalate(out) + chloride(in). Functionally, antiporter that mediates the exchange of sulfate and oxalate against chloride ions across a membrane. Stimulates anion transport activity of CFTR. May cooperate with CFTR in the regulation of chloride and bicarbonate ions fluxes required for activation of the ADCY10/PKA pathway during sperm motility and sperm capacitation. May play a role in sperm tail differentiation and motility and hence male fertility. The protein is Testis anion transporter 1 of Bos taurus (Bovine).